The following is a 248-amino-acid chain: MFPIQIAPNDPRLTQICARWDLTPNDNAEFSLLFEEDILTLKKRDEPKLGGIMVDFVSGAVAHRRKFGGGRGQAIAKAVGLKAGATPTVVDGTAGLGRDAFVLASLGCRVLLIERHPVVAALLEDGLRRAYLDGEIGPWMQQRMQLVHGSSLEALDNLEDKPDVVYLDPMYPHREKSALVKKEMRVFQSLVGADTDADGLLAPALRLAQKRVVVKRPDYAEDLDGVRPSTRIETKKNRFDVYVKAAMG.

S-adenosyl-L-methionine is bound by residues 98-99, 114-115, 150-151, and D168; these read RD, ER, and SS.

The protein belongs to the methyltransferase superfamily. RsmJ family.

Its subcellular location is the cytoplasm. It carries out the reaction guanosine(1516) in 16S rRNA + S-adenosyl-L-methionine = N(2)-methylguanosine(1516) in 16S rRNA + S-adenosyl-L-homocysteine + H(+). In terms of biological role, specifically methylates the guanosine in position 1516 of 16S rRNA. This chain is Ribosomal RNA small subunit methyltransferase J, found in Shewanella amazonensis (strain ATCC BAA-1098 / SB2B).